A 269-amino-acid chain; its full sequence is Centromere protein K (269 aa).

The span at 1 to 10 (MNQEDLDPDS) shows a compositional bias: acidic residues. The tract at residues 1–20 (MNQEDLDPDSTTDVGDVTNT) is disordered. Coiled coils occupy residues 22–42 (EELI…QNKL) and 98–151 (QKLR…NKVE).

The protein belongs to the CENP-K/MCM22 family. Component of the CENPA-CAD complex, composed of CENPI, CENPK, CENPL, CENPO, CENPP, CENPQ, CENPR and CENPS. The CENPA-CAD complex interacts with the CENPA-NAC complex, at least composed of CENPA, CENPC, CENPH, CENPM, CENPN, CENPT and CENPU. Interacts directly with CENPH. As to expression, detected in several fetal organs with highest levels in fetal liver. In adults, it is weakly expressed in lung and placenta.

It is found in the nucleus. It localises to the chromosome. The protein resides in the centromere. The protein localises to the kinetochore. Functionally, component of the CENPA-CAD (nucleosome distal) complex, a complex recruited to centromeres which is involved in assembly of kinetochore proteins, mitotic progression and chromosome segregation. May be involved in incorporation of newly synthesized CENPA into centromeres via its interaction with the CENPA-NAC complex. Acts in coordination with KNL1 to recruit the NDC80 complex to the outer kinetochore. This is Centromere protein K (CENPK) from Homo sapiens (Human).